The primary structure comprises 326 residues: MSAVAPDGRKMLRLEVRNSQTPIERKPEWIKTRAKMGPEYKQLQQLVKGEGLHTVCQEAGCPNIFECWEDREATFLIGGDQCTRRCDFCQIDTGKPQALDRDEPRRVGESVVTMDLNYATITGVARDDLEDGGAWLYAETVRQIHTLTAEREAGATKVELLIPDFNAEPEQLAEVFSSRPEVLAHNVETVPRIFKRIRPGFRYERSLEVITRAREAGLITKSNLILGMGETREEVSEALQDLYDAGCELITITQYLRPSVRHHPVERWVKPHEFVELKDEADAIGYSGVMSGPLVRSSYRAGRLFQQAMEARGVAAAGSAQAAQAV.

The [4Fe-4S] cluster site is built by cysteine 56, cysteine 61, cysteine 67, cysteine 82, cysteine 86, cysteine 89, and serine 298. Residues 68–287 (WEDREATFLI…KDEADAIGYS (220 aa)) form the Radical SAM core domain.

It belongs to the radical SAM superfamily. Lipoyl synthase family. [4Fe-4S] cluster is required as a cofactor.

The protein resides in the cytoplasm. It carries out the reaction [[Fe-S] cluster scaffold protein carrying a second [4Fe-4S](2+) cluster] + N(6)-octanoyl-L-lysyl-[protein] + 2 oxidized [2Fe-2S]-[ferredoxin] + 2 S-adenosyl-L-methionine + 4 H(+) = [[Fe-S] cluster scaffold protein] + N(6)-[(R)-dihydrolipoyl]-L-lysyl-[protein] + 4 Fe(3+) + 2 hydrogen sulfide + 2 5'-deoxyadenosine + 2 L-methionine + 2 reduced [2Fe-2S]-[ferredoxin]. It functions in the pathway protein modification; protein lipoylation via endogenous pathway; protein N(6)-(lipoyl)lysine from octanoyl-[acyl-carrier-protein]: step 2/2. In terms of biological role, catalyzes the radical-mediated insertion of two sulfur atoms into the C-6 and C-8 positions of the octanoyl moiety bound to the lipoyl domains of lipoate-dependent enzymes, thereby converting the octanoylated domains into lipoylated derivatives. This is Lipoyl synthase from Streptomyces griseus subsp. griseus (strain JCM 4626 / CBS 651.72 / NBRC 13350 / KCC S-0626 / ISP 5235).